Reading from the N-terminus, the 82-residue chain is Bowman-Birk type proteinase inhibitor (82 aa).

The tract at residues 1–24 is disordered; it reads SGHHDETTDEPSESSKPCCDQCSC. Intrachain disulfides connect C18–C72, C19–C34, C22–C68, C24–C32, C42–C49, C46–C61, and C51–C59.

It belongs to the Bowman-Birk serine protease inhibitor family.

Its function is as follows. Trypsin and chymotrypsin are inhibited simultaneously. There are two separate reactive sites for trypsin and chymotrypsin but they do not inhibit simultaneously. In Phaseolus angularis (Azuki bean), this protein is Bowman-Birk type proteinase inhibitor.